Here is a 1381-residue protein sequence, read N- to C-terminus: Protein HEG homolog 1 (1381 aa).

An N-terminal signal peptide occupies residues 1–29; sequence MASPRASRWPPPLLLLLLPLLLLPPAAPG. A disordered region spans residues 24–108; it reads PPAAPGTRDP…APRGGSADAA (85 aa). Over residues 25 to 37 the composition is skewed to pro residues; that stretch reads PAAPGTRDPPPSP. Residues 30–1248 lie on the Extracellular side of the membrane; it reads TRDPPPSPAR…GLNCGNPYQL (1219 aa). The segment covering 38–52 has biased composition (low complexity); that stretch reads ARRALSLAPLAGAGL. Over residues 55–74 the composition is skewed to basic and acidic residues; sequence QLERRPEREPPPTPPRERRG. A glycan (O-linked (GalNAc...) threonine) is linked at Thr67. A compositionally biased stretch (low complexity) spans 93 to 105; sequence RGPSGRAPRGGSA. Asn123, Asn159, Asn180, and Asn314 each carry an N-linked (GlcNAc...) asparagine glycan. The segment covering 301–316 has biased composition (low complexity); the sequence is DLSSSSESTEKLNNST. 2 disordered regions span residues 301–325 and 376–447; these read DLSSSSESTEKLNNSTGLQSSSVSQ and PSAV…RSVA. The span at 424–444 shows a compositional bias: polar residues; the sequence is LASSSEVQNGSPMSQTETVSR. Residues Asn462, Asn520, and Asn610 are each glycosylated (N-linked (GlcNAc...) asparagine). The tract at residues 491–529 is disordered; the sequence is STVQSGGSHTALGDRSYSESSSTSSSESLNSSAPRGERS. Low complexity predominate over residues 508-522; the sequence is SESSSTSSSESLNSS. Disordered stretches follow at residues 612–680, 706–757, and 774–830; these read SSYD…PLPS, SDAS…PVTS, and QTAD…TLPA. The span at 620-648 shows a compositional bias: polar residues; it reads QPSTESPVLHTSNLPSYTPTINMPNTSVV. 2 stretches are compositionally biased toward low complexity: residues 657 to 680 and 706 to 748; these read SDSSSSSSSSSSSSSSGPPLPLPS and SDAS…PVLP. Composition is skewed to polar residues over residues 774-784 and 792-809; these read QTADLKSQSTP and ESKSPSLVSLPTESTKAV. Low complexity predominate over residues 810–825; sequence TTNSPLPPSLTESSTE. The EGF-like 1 domain maps to 985-1023; it reads SVNSCAVNPCLHNGECVADNTSRGYHCRCPPSWQGDDCS. 6 disulfides stabilise this stretch: Cys989–Cys1000, Cys994–Cys1011, Cys1013–Cys1022, Cys1029–Cys1040, Cys1034–Cys1049, and Cys1051–Cys1062. The EGF-like 2; calcium-binding domain occupies 1025–1063; it reads DVNECLSNPCPSTAMCNNTQGSFICKCPVGYQLEKGICN. Residue Asn1137 is glycosylated (N-linked (GlcNAc...) asparagine). A helical membrane pass occupies residues 1249-1269; it reads ITVVIAAAGGGLLLILGIALI. Topologically, residues 1270–1381 are cytoplasmic; it reads VTCCRKNKND…SDESRRRDYF (112 aa). Phosphoserine is present on Ser1359.

As to quaternary structure, interacts with CCM2 and KRIT1; KRIT1 markedly facilitates interaction with CCM2.

Its subcellular location is the cell membrane. It is found in the cell junction. The protein localises to the secreted. Receptor component of the CCM signaling pathway which is a crucial regulator of heart and vessel formation and integrity. May act through the stabilization of endothelial cell junctions. The polypeptide is Protein HEG homolog 1 (HEG1) (Homo sapiens (Human)).